Here is an 886-residue protein sequence, read N- to C-terminus: MSATYTNTITQRRKTAKVRQQQQHQWTGSDLSGESNERLHFRSRSTNSMQQHTAISNSPSPLCCNGARALTMLNCCVDVNCHLNAPLRGSVNRHTTPTPTPTATPTPVATPKQASPSPTSDRSRSLSRSPSPSRSRSLSCQKQIDKNSAGAASAEERKTANASSQPFTVNLRIDLFSWTLFLLAFGTRFYKLATPPHIVFDELHYGKYISMYMRNIFFFDQHPPLGKQLIAGLVSLAGYDGNYTFTRIGEPYSPEMPIFWFRFLPAMCGSLLAPAVYNLLLEAKLSRWSSALGGLLVVLDNSLLTQSRFVLMESMLLLATTVGIACLLRFQRSRLGSLEWFFTGTAAAVCLGAAGTVKYVGFLALGLAFYLLCRHLWQLLYDAGLTDRQLWMHAISRLLIFVGIPLAVYLGVFYIHFKTLHRAGPHDSIMTSAFQASLDGGLASITKGQPLAVVHGSQITLRHTHGRTCWLHSHAAVYPVRYPDKRGSSHQQQVTCYSFKDVNNWWLVKRPTKENLVVGDEPDIIRHGEIIQLVHGITSRALNSHDVAAAMTPQCQEVSCYIDYEIKMAGELLWRVEILNRDSEGDIWHAIKSEVRLVHVSTEASLKFSGRQLPEWGFNQHEVVADREKAIHEDAIWNVEEHRYTQTEDHRERERQMLTAEMIPTKRTRISFWAKLLELQSKMLFQTKSVPNHMYSSMPHEWPLMDKGIAYWLDSQSSAQIYLLGNILLWYTATMGILVYAGLLAFYAMRRQRLCFDISEQEWQRFVLAGDTFFMGYVMHYIPYFCVDRTLFLHNYLPAFVFKLLLLCFVVEHLDYLLRRFCTGRGVHLVRLYRLMLILWLVGVLSIFSKFIPFSYGARKMTLNEVRSLRWKDTWDFVLHKNHHLY.

Composition is skewed to polar residues over residues 1–10 (MSATYTNTIT) and 18–34 (VRQQQQHQWTGSDLSGE). Disordered stretches follow at residues 1–37 (MSATYTNTITQRRKTAKVRQQQQHQWTGSDLSGESNE) and 88–161 (RGSV…KTAN). Low complexity predominate over residues 105–139 (PTPVATPKQASPSPTSDRSRSLSRSPSPSRSRSLS). Asn161 and Asn242 each carry an N-linked (GlcNAc...) asparagine glycan. The next 4 helical transmembrane spans lie at 256-276 (MPIFWFRFLPAMCGSLLAPAV), 310-330 (VLMESMLLLATTVGIACLLRF), 349-369 (VCLGAAGTVKYVGFLALGLAF), and 398-418 (LLIFVGIPLAVYLGVFYIHFK). MIR domains are found at residues 450-511 (PLAV…VKRP), 522-579 (PDII…VEIL), and 585-642 (GDIW…VEEH). 3 consecutive transmembrane segments (helical) span residues 727 to 747 (ILLWYTATMGILVYAGLLAFY), 791 to 811 (LFLHNYLPAFVFKLLLLCFVV), and 835 to 855 (LMLILWLVGVLSIFSKFIPFS).

It belongs to the glycosyltransferase 39 family. As to quaternary structure, interacts with tw/POMT2. As to expression, at the cellular blastoderm stage, expression accumulates in the ventrally located mesoderm primordium. At germ band extension, mesoderm expression is seen as stripes of strong expression. A very strong signal is also detected in the invaginating gut. As the germ band retracts, mesodermal expression decays and becomes restricted to somatic muscle precursors. After dorsal closure, expression has disappeared from the mesoderm and remains in the endoderm. Some expression is detected in a few cells of the head and the pharyngeal muscles.

It is found in the endoplasmic reticulum membrane. It catalyses the reaction a di-trans,poly-cis-dolichyl beta-D-mannosyl phosphate + L-seryl-[protein] = 3-O-(alpha-D-mannosyl)-L-seryl-[protein] + a di-trans,poly-cis-dolichyl phosphate + H(+). The enzyme catalyses a di-trans,poly-cis-dolichyl beta-D-mannosyl phosphate + L-threonyl-[protein] = 3-O-(alpha-D-mannosyl)-L-threonyl-[protein] + a di-trans,poly-cis-dolichyl phosphate + H(+). It functions in the pathway protein modification; protein glycosylation. Functionally, rt/POMT1 and tw/POMT2 function as a protein O-mannosyltransferase in association with each other to generate and maintain normal muscle development. The sequence is that of Protein O-mannosyltransferase 1 from Drosophila melanogaster (Fruit fly).